A 101-amino-acid chain; its full sequence is Large ribosomal subunit protein uL24 (101 aa).

This sequence belongs to the universal ribosomal protein uL24 family. In terms of assembly, part of the 50S ribosomal subunit.

In terms of biological role, one of two assembly initiator proteins, it binds directly to the 5'-end of the 23S rRNA, where it nucleates assembly of the 50S subunit. Its function is as follows. One of the proteins that surrounds the polypeptide exit tunnel on the outside of the subunit. The polypeptide is Large ribosomal subunit protein uL24 (Streptococcus mutans serotype c (strain ATCC 700610 / UA159)).